Reading from the N-terminus, the 271-residue chain is Bifunctional protein FolD (271 aa).

NADP(+) is bound by residues 154-156 (GRS), S181, and I222.

This sequence belongs to the tetrahydrofolate dehydrogenase/cyclohydrolase family. In terms of assembly, homodimer.

It carries out the reaction (6R)-5,10-methylene-5,6,7,8-tetrahydrofolate + NADP(+) = (6R)-5,10-methenyltetrahydrofolate + NADPH. The enzyme catalyses (6R)-5,10-methenyltetrahydrofolate + H2O = (6R)-10-formyltetrahydrofolate + H(+). It functions in the pathway one-carbon metabolism; tetrahydrofolate interconversion. In terms of biological role, catalyzes the oxidation of 5,10-methylenetetrahydrofolate to 5,10-methenyltetrahydrofolate and then the hydrolysis of 5,10-methenyltetrahydrofolate to 10-formyltetrahydrofolate. This is Bifunctional protein FolD from Thermotoga maritima (strain ATCC 43589 / DSM 3109 / JCM 10099 / NBRC 100826 / MSB8).